We begin with the raw amino-acid sequence, 494 residues long: UDP-N-acetylmuramoyl-L-alanyl-D-glutamate--2,6-diaminopimelate ligase (494 aa).

Ser-32 serves as a coordination point for UDP-N-acetyl-alpha-D-muramoyl-L-alanyl-D-glutamate. An ATP-binding site is contributed by 112–118 (GTNGKTT). UDP-N-acetyl-alpha-D-muramoyl-L-alanyl-D-glutamate contacts are provided by residues Asn-153, 154–155 (TT), Ser-181, and Arg-189. Lys-221 carries the N6-carboxylysine modification. Meso-2,6-diaminopimelate is bound by residues Arg-383, 407-410 (DNPR), Gly-459, and Glu-463. Residues 407 to 410 (DNPR) carry the Meso-diaminopimelate recognition motif motif.

Belongs to the MurCDEF family. MurE subfamily. Mg(2+) serves as cofactor. In terms of processing, carboxylation is probably crucial for Mg(2+) binding and, consequently, for the gamma-phosphate positioning of ATP.

Its subcellular location is the cytoplasm. The catalysed reaction is UDP-N-acetyl-alpha-D-muramoyl-L-alanyl-D-glutamate + meso-2,6-diaminopimelate + ATP = UDP-N-acetyl-alpha-D-muramoyl-L-alanyl-gamma-D-glutamyl-meso-2,6-diaminopimelate + ADP + phosphate + H(+). It participates in cell wall biogenesis; peptidoglycan biosynthesis. Its function is as follows. Catalyzes the addition of meso-diaminopimelic acid to the nucleotide precursor UDP-N-acetylmuramoyl-L-alanyl-D-glutamate (UMAG) in the biosynthesis of bacterial cell-wall peptidoglycan. The protein is UDP-N-acetylmuramoyl-L-alanyl-D-glutamate--2,6-diaminopimelate ligase of Solibacter usitatus (strain Ellin6076).